The sequence spans 295 residues: Nucleotide-binding protein SSU98_0619 (295 aa).

12-19 lines the ATP pocket; it reads GMSGAGKT. 62-65 provides a ligand contact to GTP; it reads DMRS.

Belongs to the RapZ-like family.

Functionally, displays ATPase and GTPase activities. This is Nucleotide-binding protein SSU98_0619 from Streptococcus suis (strain 98HAH33).